Consider the following 229-residue polypeptide: tRNA (guanosine(18)-2'-O)-methyltransferase (229 aa).

The S-adenosyl-L-methionine site is built by threonine 96, isoleucine 139, and leucine 148.

The protein belongs to the class IV-like SAM-binding methyltransferase superfamily. RNA methyltransferase TrmH family.

The enzyme catalyses guanosine(18) in tRNA + S-adenosyl-L-methionine = 2'-O-methylguanosine(18) in tRNA + S-adenosyl-L-homocysteine + H(+). Catalyzes the 2'-O methylation of guanosine at position 18 in tRNA. This is tRNA (guanosine(18)-2'-O)-methyltransferase from Escherichia coli O157:H7.